A 270-amino-acid polypeptide reads, in one-letter code: G-box-binding factor 4 (270 aa).

The disordered stretch occupies residues 1–46; that stretch reads MASFKLMSSSNSDLSRRNSSSASSSPSIRSSHHLRPNPHADHSRIS. Positions 8–29 are enriched in low complexity; sequence SSSNSDLSRRNSSSASSSPSIR. Serine 27 carries the post-translational modification Phosphoserine. The 64-residue stretch at 187-250 folds into the bZIP domain; that stretch reads AAQRQKRMIK…YKKLMEVLIP (64 aa). A basic motif region spans residues 190–208; sequence RQKRMIKNRESAARSRERK. The tract at residues 215-229 is leucine-zipper; that stretch reads LETLAAKLEEENEQL. The interval 250–270 is disordered; the sequence is PVDEKPRPPSRPLSRSHSLEW. Positions 261–270 are enriched in low complexity; it reads PLSRSHSLEW.

Belongs to the bZIP family. In terms of assembly, DNA-binding heterodimer with GBF2 and GBF3; non DNA-binding homodimer.

It localises to the nucleus. Its function is as follows. Binds to the G-box motif (5'-CCACGTGG-3') of the rbcS-1A gene promoter. G-box and G-box-like motifs are cis-acting elements defined in promoters of certain plant genes which are regulated by such diverse stimuli as light-induction or hormone control. This is G-box-binding factor 4 (GBF4) from Arabidopsis thaliana (Mouse-ear cress).